The following is a 374-amino-acid chain: DNA integrity scanning protein DisA (374 aa).

Positions 20-158 (DGLMRASLSA…DGMRRVLEDS (139 aa)) constitute a DAC domain. ATP is bound by residues Gly87, Leu105, and 118–122 (TRHRT).

It belongs to the DisA family. In terms of assembly, homooctamer. Mg(2+) serves as cofactor.

It catalyses the reaction 2 ATP = 3',3'-c-di-AMP + 2 diphosphate. Its function is as follows. Participates in a DNA-damage check-point that is active prior to asymmetric division when DNA is damaged. DisA forms globular foci that rapidly scan along the chromosomes during sporulation, searching for lesions. When a lesion is present, DisA pauses at the lesion site. This triggers a cellular response that culminates in a temporary block in sporulation initiation. Also has diadenylate cyclase activity, catalyzing the condensation of 2 ATP molecules into cyclic di-AMP (c-di-AMP). c-di-AMP acts as a signaling molecule that couples DNA integrity with progression of sporulation. The rise in c-di-AMP level generated by DisA while scanning the chromosome, operates as a positive signal that advances sporulation; upon encountering a lesion, the DisA focus arrests at the damaged site and halts c-di-AMP synthesis. The polypeptide is DNA integrity scanning protein DisA (Streptomyces avermitilis (strain ATCC 31267 / DSM 46492 / JCM 5070 / NBRC 14893 / NCIMB 12804 / NRRL 8165 / MA-4680)).